Reading from the N-terminus, the 439-residue chain is Ribosomal protein uS12 methylthiotransferase RimO (439 aa).

Residues 7-119 (KQLCLISLGC…IDILIAKKQN (113 aa)) form the MTTase N-terminal domain. [4Fe-4S] cluster contacts are provided by Cys-16, Cys-50, Cys-82, Cys-151, Cys-155, and Cys-158. The Radical SAM core domain maps to 137–368 (TGSSVHAYVK…ALKHQNHSFK (232 aa)).

This sequence belongs to the methylthiotransferase family. RimO subfamily. [4Fe-4S] cluster is required as a cofactor.

The protein resides in the cytoplasm. It carries out the reaction L-aspartate(89)-[ribosomal protein uS12]-hydrogen + (sulfur carrier)-SH + AH2 + 2 S-adenosyl-L-methionine = 3-methylsulfanyl-L-aspartate(89)-[ribosomal protein uS12]-hydrogen + (sulfur carrier)-H + 5'-deoxyadenosine + L-methionine + A + S-adenosyl-L-homocysteine + 2 H(+). Its function is as follows. Catalyzes the methylthiolation of an aspartic acid residue of ribosomal protein uS12. This chain is Ribosomal protein uS12 methylthiotransferase RimO, found in Helicobacter pylori (strain HPAG1).